Consider the following 343-residue polypeptide: Twinfilin (343 aa).

2 ADF-H domains span residues 4 to 139 (QTGI…KHKV) and 177 to 312 (GINC…EELH). A disordered region spans residues 314–343 (RKLNLRPQFSKPKGPPSRGAKRLTKPQAVE).

It belongs to the actin-binding proteins ADF family. Twinfilin subfamily. As to quaternary structure, interacts with G-actin; ADP-actin form.

The protein resides in the cytoplasm. It is found in the cytoskeleton. It localises to the cell cortex. Functionally, actin-binding protein involved in motile and morphological processes. Inhibits actin polymerization, likely by sequestering G-actin. The sequence is that of Twinfilin (twf) from Anopheles gambiae (African malaria mosquito).